The sequence spans 386 residues: EARP and GARP complex-interacting protein 1 (386 aa).

Residue Met-1 is modified to N-acetylmethionine. WD repeat units follow at residues 132–172 (GAQG…SQAV), 182–222 (RGQL…QIYC), 226–266 (AHGQ…EPVK), and 270–310 (EHSH…SEPF). The disordered stretch occupies residues 312–332 (HLVDDDDVSDPEEHHTEKSKE). Phosphoserine is present on Ser-320. The span at 322 to 332 (PEEHHTEKSKE) shows a compositional bias: basic and acidic residues. The WD 5 repeat unit spans residues 344 to 384 (EHEDSVYAVDWASADPWLFASLSYDGRLVINRVPRALKYHI).

Belongs to the WD repeat EIPR1 family. In terms of assembly, interacts with two multisubunit tethering complexes: EARP composed of VPS50, VPS51, VPS52 and VPS53 subunits and GARP complex composed of VPS51, VPS52, VPS53 and VPS54 subunits. Interacts with SNAP29. In terms of tissue distribution, ubiquitous. Highly expressed in brain, adipose tissue, spleen and kidney (at protein level).

Its subcellular location is the golgi apparatus. The protein resides in the trans-Golgi network. In terms of biological role, acts as a component of endosomal retrieval machinery that is involved in protein transport from early endosomes to either recycling endosomes or the trans-Golgi network. Mediates the recruitment of Golgi-associated retrograde protein (GARP) complex to the trans-Golgi network and controls early endosome-to-Golgi transport of internalized protein. Promotes the recycling of internalized transferrin receptor (TFRC) to the plasma membrane through interaction with endosome-associated recycling protein (EARP) complex. Controls proper insulin distribution and secretion, and retention of cargo in mature dense core vesicles. Required for the stability of the endosome-associated retrograde protein (EARP) complex subunits and for proper localization and association of EARP with membranes. This Rattus norvegicus (Rat) protein is EARP and GARP complex-interacting protein 1.